The chain runs to 1098 residues: Early transcription factor large subunit homolog (1098 aa).

Residues 17 to 317 (KGGRAFFPCD…PNGQPLQRQQ (301 aa)) enclose the Helicase ATP-binding domain. 64-71 (WQTGTGKS) contacts ATP. A DEAH box motif is present at residues 246–249 (DEIH). The Helicase C-terminal domain occupies 489 to 689 (MMKDILSIIR…EGDKALRKHA (201 aa)).

It belongs to the DEAD box helicase family. DEAH subfamily.

Its subcellular location is the virion. It carries out the reaction ATP + H2O = ADP + phosphate + H(+). Functionally, putative initation factor. This is Early transcription factor large subunit homolog from African swine fever virus (isolate Tick/Malawi/Lil 20-1/1983) (ASFV).